The following is a 144-amino-acid chain: Large ribosomal subunit protein uL16 (144 aa).

Belongs to the universal ribosomal protein uL16 family. Part of the 50S ribosomal subunit.

Its function is as follows. Binds 23S rRNA and is also seen to make contacts with the A and possibly P site tRNAs. This chain is Large ribosomal subunit protein uL16, found in Lactiplantibacillus plantarum (strain ATCC BAA-793 / NCIMB 8826 / WCFS1) (Lactobacillus plantarum).